The chain runs to 65 residues: Large ribosomal subunit protein bL35 (65 aa).

The interval 1–30 (MPKMKTVSGAAKRFKKTGSGRFKSKQSHLR) is disordered. The segment covering 12 to 30 (KRFKKTGSGRFKSKQSHLR) has biased composition (basic residues).

It belongs to the bacterial ribosomal protein bL35 family.

This Alteromonas mediterranea (strain DSM 17117 / CIP 110805 / LMG 28347 / Deep ecotype) protein is Large ribosomal subunit protein bL35.